The sequence spans 328 residues: 3,4-dihydroxyphenylacetaldehyde synthase 2 (328 aa).

Residue N111 is part of the active site. The residue at position 222 (K222) is an N6-(pyridoxal phosphate)lysine.

Belongs to the group II decarboxylase family. The cofactor is pyridoxal 5'-phosphate.

It carries out the reaction L-dopa + O2 + H2O + H(+) = 3,4-dihydroxyphenylacetaldehyde + H2O2 + NH4(+) + CO2. In terms of biological role, catalyzes the decarboxylation-oxidative deamination of L-3,4-dihydroxyphenylalanine (L-DOPA) to 3,4-dihydroxylphenylacetaldehyde (DHPAA). Involved in cuticle development. Probably responsible for the protein cross-linking during the development of flexible cuticles. The sequence is that of 3,4-dihydroxyphenylacetaldehyde synthase 2 (amd) from Drosophila simulans (Fruit fly).